We begin with the raw amino-acid sequence, 570 residues long: Double-stranded RNA-binding protein Staufen homolog 2 (570 aa).

One can recognise a DRBM 1 domain in the interval 8–75; sequence TPVCLVNELA…ANKALTESTL (68 aa). Disordered stretches follow at residues 71 to 94 and 178 to 203; these read TESTLPKPVQKPPKSNVNNNPGSI and ALQNEPIPEKSPQNGESGKEMDDDKD. A compositionally biased stretch (polar residues) spans 83-94; the sequence is PKSNVNNNPGSI. The 87-residue stretch at 95-181 folds into the DRBM 2 domain; the sequence is TPTVELNGLA…AMKALQALQN (87 aa). Ser-188 is subject to Phosphoserine. The span at 194–203 shows a compositional bias: basic and acidic residues; sequence SGKEMDDDKD. DRBM domains are found at residues 207 to 274 and 307 to 375; these read SEIS…ELKK and NPIS…QLGY. 2 short sequence motifs (nuclear localization signal) span residues 273–291 and 373–412; these read KKLPPLPVVEKPKLFFKKR and LGYKASTSLQDPLDKTGENKGWSGPKPGFPEPTNNTPKGI. Residues 381–413 are disordered; the sequence is LQDPLDKTGENKGWSGPKPGFPEPTNNTPKGIL. Residues 381–570 are required for dendritic transport; sequence LQDPLDKTGE…QDCKKSKSAI (190 aa). Ser-395 bears the Phosphoserine mark. Thr-405 carries the phosphothreonine modification. Phosphoserine is present on residues Ser-416, Ser-426, Ser-440, Ser-455, and Ser-492. Residues 545–570 form a disordered region; sequence LREKADNNQAKPASISQDCKKSKSAI. A compositionally biased stretch (polar residues) spans 551 to 561; it reads NNQAKPASISQ.

As to quaternary structure, interacts with microtubules. Isoform 2 and isoform 3 may also interact with ribosomes, and this association is independent of translation. Identified in a mRNP complex, at least composed of DHX9, DDX3X, ELAVL1, HNRNPU, IGF2BP1, ILF3, PABPC1, PCBP2, PTBP2, STAU1, STAU2, SYNCRIP and YBX1. Interacts with the exportin XPO5. This requires RNA and RAN bound to GTP. Interacts with TRIM71 (via NHL repeats) in an RNA-dependent manner. As to expression, expressed in brain and neurons, where isoform 2 and isoform 3 appear to be the most abundant. Expressed at the neuromuscular junction of the extensor digitorum longus, tibialis anterior and soleus muscles. Expression at neuromuscular junctions is most pronounced in slow-twitch muscle. Also weakly expressed in heart, kidney, ovary and testis.

Its subcellular location is the cytoplasm. The protein resides in the nucleus. It is found in the nucleolus. The protein localises to the endoplasmic reticulum. Functionally, RNA-binding protein required for the microtubule-dependent transport of neuronal RNA from the cell body to the dendrite. As protein synthesis occurs within the dendrite, the localization of specific mRNAs to dendrites may be a prerequisite for neurite outgrowth and plasticity at sites distant from the cell body. This is Double-stranded RNA-binding protein Staufen homolog 2 (Stau2) from Mus musculus (Mouse).